Reading from the N-terminus, the 609-residue chain is MMSENRNTIIAIVLSGLILIAWQYFYNIPQMEKDRAAQQAQSQTAKSPTEPTPNSPKPDHPAAESVVARGVAIATTPRVKIDTPRLSGSISLKGARIDDLLLTKFRETVDPASPAIELFSPSGTTTPYYAEFGWVAATGSTARVPDQNTVWQQEGSGALTQSTPVTLKYDNGEGLTFRRTIAVDDHYLFTIKDEVTNAGGAPVTLYPFALISRHGTPAVSGYYILHEGLIGYLGDQKLQEYSYKKIDEAKSVSFKVTNGWLGITDKYWAAALLPDTSAQLQARFSSNESGSVKTYQADYLEDAQTIPVGGTGSVNTRLFAGAKEAGVVGINFPFVELGGYNKQLGLNHFDLLIDWGWFYFITKPMFLALDFFFHVFGNFGIAILFVTVLIKAIFFPLANRSYASMAKMKAVQPQIAALKERFPDDKMKLQQEMMEIYKKEKINPISGCLPMVLQIPVFFSLYKVLFVTIEMRHAPFFAWIKDLSAPDPTHIFNLFGLLPYDPSAVPLLGPYLAIGAWPIIMGITMWFQMKLNPTPPDPTQKLIFDWMPVIFTFMLAAFPAGLVIYWAWNNTLSVIQQSYIMRRNGVKVELLNNVKSVFRRKSSDKPAKT.

Residues 9–29 (IIAIVLSGLILIAWQYFYNIP) traverse the membrane as a helical segment. The tract at residues 35-63 (RAAQQAQSQTAKSPTEPTPNSPKPDHPAA) is disordered. 4 consecutive transmembrane segments (helical) span residues 375–395 (VFGN…AIFF), 449–469 (LPMV…FVTI), 507–527 (LLGP…TMWF), and 546–566 (WMPV…VIYW).

It belongs to the OXA1/ALB3/YidC family. Type 1 subfamily. In terms of assembly, interacts with the Sec translocase complex via SecD. Specifically interacts with transmembrane segments of nascent integral membrane proteins during membrane integration.

It localises to the cell inner membrane. In terms of biological role, required for the insertion and/or proper folding and/or complex formation of integral membrane proteins into the membrane. Involved in integration of membrane proteins that insert both dependently and independently of the Sec translocase complex, as well as at least some lipoproteins. Aids folding of multispanning membrane proteins. The sequence is that of Membrane protein insertase YidC from Nitrobacter hamburgensis (strain DSM 10229 / NCIMB 13809 / X14).